The primary structure comprises 270 residues: Diaminopimelate epimerase (270 aa).

The substrate site is built by N15, Q49, and N66. The active-site Proton donor is C75. Substrate is bound by residues 76–77 (GN), N155, N187, and 204–205 (ER). C213 serves as the catalytic Proton acceptor. 214–215 (GS) is a binding site for substrate.

Belongs to the diaminopimelate epimerase family. As to quaternary structure, homodimer.

It localises to the cytoplasm. The enzyme catalyses (2S,6S)-2,6-diaminopimelate = meso-2,6-diaminopimelate. Its pathway is amino-acid biosynthesis; L-lysine biosynthesis via DAP pathway; DL-2,6-diaminopimelate from LL-2,6-diaminopimelate: step 1/1. Its function is as follows. Catalyzes the stereoinversion of LL-2,6-diaminopimelate (L,L-DAP) to meso-diaminopimelate (meso-DAP), a precursor of L-lysine and an essential component of the bacterial peptidoglycan. The protein is Diaminopimelate epimerase of Rickettsia prowazekii (strain Madrid E).